The chain runs to 840 residues: Probable alpha-glucuronidase A (840 aa).

The signal sequence occupies residues 1-19; sequence MWSGIPVFALLSSIGIAAA. N-linked (GlcNAc...) asparagine glycans are attached at residues N50, N149, N222, N262, N279, N310, N465, N527, N576, N610, N682, N723, and N732.

The protein belongs to the glycosyl hydrolase 67 family.

It is found in the secreted. The enzyme catalyses an alpha-D-glucuronoside + H2O = D-glucuronate + an alcohol. Its function is as follows. Alpha-glucuronidase involved in the hydrolysis of xylan, a major structural heterogeneous polysaccharide found in plant biomass representing the second most abundant polysaccharide in the biosphere, after cellulose. Releases 4-O-methylglucuronic acid from xylan. In Neosartorya fischeri (strain ATCC 1020 / DSM 3700 / CBS 544.65 / FGSC A1164 / JCM 1740 / NRRL 181 / WB 181) (Aspergillus fischerianus), this protein is Probable alpha-glucuronidase A (aguA).